Here is a 144-residue protein sequence, read N- to C-terminus: Putative pre-16S rRNA nuclease (144 aa).

This sequence belongs to the YqgF nuclease family.

The protein resides in the cytoplasm. Could be a nuclease involved in processing of the 5'-end of pre-16S rRNA. This Picosynechococcus sp. (strain ATCC 27264 / PCC 7002 / PR-6) (Agmenellum quadruplicatum) protein is Putative pre-16S rRNA nuclease.